The chain runs to 309 residues: G-protein coupled receptor 35 (309 aa).

Over 1–24 (MNGTYNTCGSSDLTWPPAIKLGFY) the chain is Extracellular. An N-linked (GlcNAc...) asparagine glycan is attached at Asn2. Residues 25–45 (AYLGVLLVLGLLLNSLALWVF) traverse the membrane as a helical segment. The Cytoplasmic portion of the chain corresponds to 46-56 (CCRMQQWTETR). Residues 57 to 77 (IYMTNLAVADLCLLCTLPFVL) form a helical membrane-spanning segment. The Extracellular segment spans residues 78–90 (HSLRDTSDTPLCQ). The cysteines at positions 89 and 162 are disulfide-linked. The helical transmembrane segment at 91–112 (LSQGIYLTNRYMSISLVTAIAV) threads the bilayer. Residues 113–135 (DRYVAVRHPLRARGLRSPRQAAA) lie on the Cytoplasmic side of the membrane. Residues 136 to 156 (VCAVLWVLVIGSLVARWLLGI) form a helical membrane-spanning segment. Over 157-174 (QEGGFCFRSTRHNFNSMA) the chain is Extracellular. Residues 175-195 (FPLLGFYLPLAVVVFCSLKVV) traverse the membrane as a helical segment. Residues 196–218 (TALAQRPPTDVGQAEATRKAARM) are Cytoplasmic-facing. The chain crosses the membrane as a helical span at residues 219-239 (VWANLLVFVVCFLPLHVGLTV). The Extracellular portion of the chain corresponds to 240–258 (RLAVGWNACALLETIRRAL). Residues 259-279 (YITSKLSDANCCLDAICYYYM) form a helical membrane-spanning segment. Over 280 to 309 (AKEFQEASALAVAPSAKAHKSQDSLCVTLA) the chain is Cytoplasmic. Ser287 and Ser294 each carry phosphoserine. Phosphoserine; by GRK5 and GRK6 is present on residues Ser300 and Ser303. The residue at position 307 (Thr307) is a Phosphothreonine.

The protein belongs to the G-protein coupled receptor 1 family. Interacts with GNA13. Interacts with ARRB2. In terms of processing, multiply phosphorylated in clusters of serines and threonines in the C-terminal tail. Phosphorylation of Ser-300 and Ser-303 is mediated by GRK5 and/or GRK6. Predominantly expressed in immune and gastrointestinal tissues.

The protein resides in the cell membrane. G-protein coupled receptor that binds to several ligands including the tryptophan metabolite kynurenic acid (KYNA), lysophosphatidic acid (LPA) or 5-hydroxyindoleacetic acid (5-HIAA) with high affinity, leading to rapid and transient activation of numerous intracellular signaling pathways. Plays a role in neutrophil recruitment to sites of inflammation and bacterial clearance through the major serotonin metabolite 5-HIAA that acts as a physiological ligand. Stimulates lipid metabolism, thermogenic, and anti-inflammatory gene expression in adipose tissue once activated by kynurenic acid. In macrophages, activation by lysophosphatidic acid promotes GPR35-induced signaling with a distinct transcriptional profile characterized by TNF production associated with ERK and NF-kappa-B activation. In turn, induces chemotaxis of macrophages. The chain is G-protein coupled receptor 35 (GPR35) from Homo sapiens (Human).